Consider the following 217-residue polypeptide: Uracil-DNA glycosylase (217 aa).

Catalysis depends on Asp62, which acts as the Proton acceptor.

This sequence belongs to the uracil-DNA glycosylase (UDG) superfamily. UNG family.

Its subcellular location is the cytoplasm. The catalysed reaction is Hydrolyzes single-stranded DNA or mismatched double-stranded DNA and polynucleotides, releasing free uracil.. Functionally, excises uracil residues from the DNA which can arise as a result of misincorporation of dUMP residues by DNA polymerase or due to deamination of cytosine. The sequence is that of Uracil-DNA glycosylase from Streptococcus suis (strain 98HAH33).